The following is a 392-amino-acid chain: MSHDPQPLGGKIISKPVMIFGPLIVICMLLIVKRLVFGLGSVSDLNGGFPWGVWIAFDLLIGTGFACGGWALAWAVYVFNRGQYHPLVRPALLASLFGYSLGGLSITIDVGRYWNLPYFYIPGHFNVNSVLFETAVCMTIYIGVMALEFAPALFERLGWKVSLQRLNKVMFFIIALGALLPTMHQSSMGSLMISAGYKVHPLWQSYEMLPLFSLLTAFIMGFSIVIFEGSLVQAGLRGNGPDEKSLFVKLTNTISVLLAIFIVLRFGELIYRDKLSLAFAGDFYSVMFWIEVLLMLFPLVVLRVAKLRNDSRMLFLSALSALLGCATWRLTYSLVAFNPGGGYAYFPTWEELLISIGFVAIEICAYIVLIRLLPILPPLKQNDHNRHEASKA.

Over 1 to 11 the chain is Periplasmic; sequence MSHDPQPLGGK. The helical transmembrane segment at 12-32 threads the bilayer; it reads IISKPVMIFGPLIVICMLLIV. The Cytoplasmic portion of the chain corresponds to 33 to 34; the sequence is KR. A helical membrane pass occupies residues 35–55; the sequence is LVFGLGSVSDLNGGFPWGVWI. Residues 56-58 are Periplasmic-facing; it reads AFD. A helical transmembrane segment spans residues 59–79; that stretch reads LLIGTGFACGGWALAWAVYVF. Over 80–90 the chain is Cytoplasmic; it reads NRGQYHPLVRP. The chain crosses the membrane as a helical span at residues 91 to 111; the sequence is ALLASLFGYSLGGLSITIDVG. The Periplasmic segment spans residues 112–133; that stretch reads RYWNLPYFYIPGHFNVNSVLFE. Residues 134–154 traverse the membrane as a helical segment; it reads TAVCMTIYIGVMALEFAPALF. Topologically, residues 155 to 168 are cytoplasmic; the sequence is ERLGWKVSLQRLNK. Residues 169 to 189 traverse the membrane as a helical segment; the sequence is VMFFIIALGALLPTMHQSSMG. The Periplasmic segment spans residues 190-207; it reads SLMISAGYKVHPLWQSYE. Residues 208–228 traverse the membrane as a helical segment; sequence MLPLFSLLTAFIMGFSIVIFE. Over 229 to 249 the chain is Cytoplasmic; sequence GSLVQAGLRGNGPDEKSLFVK. A helical transmembrane segment spans residues 250-270; the sequence is LTNTISVLLAIFIVLRFGELI. The Periplasmic portion of the chain corresponds to 271-281; the sequence is YRDKLSLAFAG. The chain crosses the membrane as a helical span at residues 282–302; sequence DFYSVMFWIEVLLMLFPLVVL. The Cytoplasmic segment spans residues 303-333; that stretch reads RVAKLRNDSRMLFLSALSALLGCATWRLTYS. Residues 334–354 traverse the membrane as a helical segment; sequence LVAFNPGGGYAYFPTWEELLI. Ser355 is a topological domain (periplasmic). A helical membrane pass occupies residues 356–376; it reads IGFVAIEICAYIVLIRLLPIL. Topologically, residues 377-392 are cytoplasmic; it reads PPLKQNDHNRHEASKA.

Belongs to the NrfD family.

The protein localises to the cell inner membrane. In terms of biological role, probable b-type cytochrome. This Escherichia coli (strain K12) protein is Probable Ni/Fe-hydrogenase 2 b-type cytochrome subunit (hybB).